We begin with the raw amino-acid sequence, 201 residues long: Large ribosomal subunit protein uL4 (201 aa).

Residues 51 to 73 (EVTGSGKKPWRQKGTGRARAGSV) are disordered.

The protein belongs to the universal ribosomal protein uL4 family. Part of the 50S ribosomal subunit.

In terms of biological role, one of the primary rRNA binding proteins, this protein initially binds near the 5'-end of the 23S rRNA. It is important during the early stages of 50S assembly. It makes multiple contacts with different domains of the 23S rRNA in the assembled 50S subunit and ribosome. Functionally, forms part of the polypeptide exit tunnel. The sequence is that of Large ribosomal subunit protein uL4 from Erwinia tasmaniensis (strain DSM 17950 / CFBP 7177 / CIP 109463 / NCPPB 4357 / Et1/99).